An 804-amino-acid polypeptide reads, in one-letter code: General transcription and DNA repair factor IIH helicase/translocase subunit XPB (804 aa).

Disordered stretches follow at residues 1–61 (MSLK…NSNE) and 220–255 (QSSK…KSSS). Positions 14–36 (PDEDLEEYSDYSDVDNYGEEDDD) are enriched in acidic residues. 2 stretches are compositionally biased toward low complexity: residues 47 to 60 (NNNK…TNSN) and 220 to 229 (QSSKQKSSKP). Positions 236–255 (EDKKDITNDSSKETAEKSSS) are enriched in basic and acidic residues. The Helicase ATP-binding domain maps to 335 to 497 (MFGNGRARSG…DLNFLIGPKM (163 aa)). 348–355 (LPCGAGKT) provides a ligand contact to ATP. The short motif at 450–453 (DEVH) is the DEVH box element. The region spanning 551–705 (QACQFLIDYH…KVITNLKGME (155 aa)) is the Helicase C-terminal domain. Disordered regions lie at residues 736–761 (DDGE…SSGS) and 782–804 (KQLK…TKRR). Over residues 784–793 (LKKDSKEHHA) the composition is skewed to basic and acidic residues. Over residues 794-804 (LFRKHLYTKRR) the composition is skewed to basic residues.

It belongs to the helicase family. RAD25/XPB subfamily. Component of the 7-subunit TFIIH core complex composed of XPB/ptr8, XPD/rad15, ssl1, tfb1, tfb2, tfb4 and tfb5, which is active in NER. The core complex associates with the 3-subunit CTD-kinase module TFIIK composed of mcs2/cyclin H, mcs6/cdk7 and pmh1/tfb3 to form the 10-subunit holoenzyme (holo-TFIIH) active in transcription.

The protein resides in the nucleus. It catalyses the reaction Couples ATP hydrolysis with the unwinding of duplex DNA by translocating in the 3'-5' direction.. The catalysed reaction is ATP + H2O = ADP + phosphate + H(+). Its function is as follows. Probable ATP-dependent 3'-5' DNA helicase/translocase. Binds dsDNA rather than ssDNA, unzipping it in a translocase rather than classical helicase activity. Component of the general transcription and DNA repair factor IIH (TFIIH) core complex. When complexed to CDK-activating kinase (CAK), involved in RNA transcription by RNA polymerase II. Also involved in transcription-coupled nucleotide excision repair (NER) of damaged DNA. In NER, TFIIH acts by opening DNA around the lesion to allow the excision of the damaged oligonucleotide and its replacement by a new DNA fragment. The ATPase activity of XPB/ptr8, but not its helicase activity, is required for DNA opening. In transcription, TFIIH has an essential role in transcription initiation. When the pre-initiation complex (PIC) has been established, TFIIH is required for promoter opening and promoter escape. The ATP-dependent helicase activity of XPB/ptr8 is required for promoter escape but not for promoter opening. Plays a role in mRNA export. This chain is General transcription and DNA repair factor IIH helicase/translocase subunit XPB, found in Schizosaccharomyces pombe (strain 972 / ATCC 24843) (Fission yeast).